We begin with the raw amino-acid sequence, 305 residues long: MTQRRAMLILHGKQSLNEDVRDAVADKRKQGWELDVRLTWEAGDAQRLVNEALAAGHRHIVAGGGDGTLRDIAEALALAATKASLTILPLGTANDFARAAGVPLDVSKALQLMDVAPRAVDLGEVGGKLFLNMATGGFGSQVTANTSEDLKKVLGGAAYLFTGLTRFSELHAAHGELTGPDFHWRGDLLALGIGNGRQAGGGHELCPTALADDGLLDISILPAPQEVVGTLRSLLEGGLGIDNMFIRARLPWVELKSAQGLDINLDGEPLSGEDLRFVARPGALQVHLPANSPVLGSTPLLNRPD.

The region spanning 1 to 129 (MTQRRAMLIL…VDLGEVGGKL (129 aa)) is the DAGKc domain. Residues Thr-39, 65–71 (GDGTLRD), and Thr-92 contribute to the ATP site. Mg(2+)-binding residues include Leu-210, Asp-213, and Leu-215. Glu-268 functions as the Proton acceptor in the catalytic mechanism.

This sequence belongs to the diacylglycerol/lipid kinase family. YegS lipid kinase subfamily. Mg(2+) serves as cofactor. Requires Ca(2+) as cofactor.

The protein localises to the cytoplasm. Probably phosphorylates lipids; the in vivo substrate is unknown. In Pseudomonas syringae pv. tomato (strain ATCC BAA-871 / DC3000), this protein is Probable lipid kinase YegS-like.